A 218-amino-acid chain; its full sequence is Glutathione S-transferase Mu 7 (218 aa).

Residues 2–88 form the GST N-terminal domain; it reads PMTLGYWDIR…YLGRKHNLCG (87 aa). Glutathione-binding positions include 7–8, 46–50, 59–60, and 72–73; these read YW, WLNEK, NL, and QS. A GST C-terminal domain is found at 90 to 208; that stretch reads TEEERIRVDI…KSSRFLPRPL (119 aa). Tyr-116 provides a ligand contact to substrate.

It belongs to the GST superfamily. Mu family. In terms of assembly, homodimer.

The protein resides in the cytoplasm. It carries out the reaction RX + glutathione = an S-substituted glutathione + a halide anion + H(+). Conjugation of reduced glutathione to a wide number of exogenous and endogenous hydrophobic electrophiles. The polypeptide is Glutathione S-transferase Mu 7 (Rattus norvegicus (Rat)).